A 525-amino-acid polypeptide reads, in one-letter code: EGF domain-specific O-linked N-acetylglucosamine transferase (525 aa).

An N-terminal signal peptide occupies residues 1-24 (MVPLRLVLLLHIIHFSCENEVGSA). The short motif at 293–295 (DYE) is the Required for optimal activity element. N-linked (GlcNAc...) asparagine glycosylation occurs at asparagine 352. The short motif at 522–525 (RDEL) is the Prevents secretion from ER element.

It belongs to the glycosyltransferase 61 family.

Its subcellular location is the endoplasmic reticulum lumen. The catalysed reaction is L-seryl-[protein] + UDP-N-acetyl-alpha-D-glucosamine = 3-O-(N-acetyl-beta-D-glucosaminyl)-L-seryl-[protein] + UDP + H(+). It carries out the reaction L-threonyl-[protein] + UDP-N-acetyl-alpha-D-glucosamine = 3-O-(N-acetyl-beta-D-glucosaminyl)-L-threonyl-[protein] + UDP + H(+). In terms of biological role, catalyzes the transfer of a single N-acetylglucosamine from UDP-GlcNAc to a serine or threonine residue in extracellular proteins resulting in their modification with a beta-linked N-acetylglucosamine (O-GlcNAc). Specifically glycosylates the Thr residue located between the fifth and sixth conserved cysteines of folded EGF-like domains. The protein is EGF domain-specific O-linked N-acetylglucosamine transferase (eogt) of Xenopus laevis (African clawed frog).